Reading from the N-terminus, the 1839-residue chain is DNA-directed RNA polymerase II subunit RPB1 (1839 aa).

Residues Cys-66, Cys-69, Cys-76, His-79, Cys-106, Cys-109, and Cys-147 each coordinate Zn(2+). The tract at residues 152 to 174 (DIDDVQSHSTDEPVKKSRGGCGA) is disordered. Positions 156–166 (VQSHSTDEPVK) are enriched in basic and acidic residues. Cys-172 serves as a coordination point for Zn(2+). Residues 326 to 397 (TQKSGRPIKS…PETVTPYNIE (72 aa)) mediate DNA binding. Residues Asp-495, Asp-497, and Asp-499 each coordinate Mg(2+). Residues 785-795 (GQQNVEGKRIP) form an alpha-amanitin binding region. The interval 829–841 (PQEFFFHAMGGRE) is bridging helix. The segment covering 1538–1726 (PSSSPGYSPS…PSYGPTSPSY (189 aa)) has biased composition (low complexity). Residues 1538–1839 (PSSSPGYSPS…DASKDDKGNP (302 aa)) form a disordered region. Tandem repeats lie at residues 1544–1550 (YSPSSPG), 1551–1557 (YSPTSPG), 1558–1564 (YSPTSPG), 1565–1571 (YSPTSPG), 1572–1578 (YSPTSPT), 1579–1585 (YSPSSPG), 1586–1592 (YSPTSPA), 1593–1599 (YSPTSPS), 1600–1606 (YSPTSPS), 1607–1613 (YSPTSPS), 1614–1620 (YSPTSPS), 1621–1627 (YSPTSPS), 1628–1634 (YSPTSPS), 1635–1641 (YSPTSPA), 1642–1648 (YSPTSPA), 1649–1655 (YSPTSPA), 1656–1662 (YSPTSPS), 1663–1669 (YSPTSPS), 1670–1676 (YSPTSPS), 1677–1683 (YSPTSPS), 1684–1690 (YSPTSPS), 1691–1697 (YSPTSPA), 1698–1704 (YSPTSPG), 1705–1711 (YSPTSPS), 1712–1718 (YSPTSPS), 1719–1725 (YGPTSPS), and 1726–1732 (YNPQSAK). Residues 1544-1813 (YSPSSPGYSP…LPGYSPSSTG (270 aa)) are C-terminal domain (CTD); 37 X 7 AA tandem approximate repeats of Y-[GNS]-P-[QST]-[LNS]-[APT]-[AGKNRSTY]. Residues 1727–1745 (NPQSAKYSPSIAYSPSNAR) show a composition bias toward polar residues. The stretch at 1733–1738 (YSPSIA) is one 28; approximate repeat. 6 consecutive repeat copies span residues 1739–1745 (YSPSNAR), 1752–1758 (YSPTSPN), 1759–1765 (YSPTSPS), 1766–1772 (YSPTSPS), 1773–1779 (YSPSSPT), and 1780–1786 (YSPSSPY). Residues 1747 to 1798 (SPASPYSPTSPNYSPTSPSYSPTSPSYSPSSPTYSPSSPYSSGASPDYSPSA) show a composition bias toward low complexity. Residues 1794–1799 (YSPSAG) form a 35; approximate repeat. 2 repeat units span residues 1800–1806 (YSPTLPG) and 1807–1813 (YSPSSTG). A compositionally biased stretch (basic and acidic residues) spans 1818-1839 (HEGDKKDKTGKKDASKDDKGNP).

The protein belongs to the RNA polymerase beta' chain family. Component of the RNA polymerase II (Pol II) complex consisting of at least 12 subunits. Interacts with RDM1. Interacts (via CTD) with PRP40A, PRP40B, PRP40C and CYP59. Interacts with MEE12/CCG1 and MEE14/CBP1. Binds (via CTD) to ATX1, especially when phosphorylated on 'Ser-5' of the heptapeptide repeat. In terms of processing, the tandem 7 residues repeats in the C-terminal domain (CTD) can be highly phosphorylated. The phosphorylation activates Pol II. Phosphorylation occurs mainly at residues 'Ser-2' and 'Ser-5' of the heptapeptide repeat. The phosphorylation state is believed to result from the balanced action of site-specific CTD kinases and phosphatase, and a 'CTD code' that specifies the position of Pol II within the transcription cycle has been proposed. ATX1 seems to regulate phosphorylation statment. 'Ser-2' and 'Ser-5' phosphorylation are repressed by flavopiridol (Flap) and seliciclib (Selic), inhibitors of CDK7 and CDK9.

It is found in the nucleus. It carries out the reaction RNA(n) + a ribonucleoside 5'-triphosphate = RNA(n+1) + diphosphate. Its function is as follows. DNA-dependent RNA polymerase catalyzes the transcription of DNA into RNA using the four ribonucleoside triphosphates as substrates. Largest and catalytic component of RNA polymerase II which synthesizes mRNA precursors and many functional non-coding RNAs. Forms the polymerase active center together with the second largest subunit. Pol II is the central component of the basal RNA polymerase II transcription machinery. It is composed of mobile elements that move relative to each other. NRPB1 is part of the core element with the central large cleft, the clamp element that moves to open and close the cleft and the jaws that are thought to grab the incoming DNA template. At the start of transcription, a single-stranded DNA template strand of the promoter is positioned within the central active site cleft of Pol II. A bridging helix emanates from NRPB1 and crosses the cleft near the catalytic site and is thought to promote translocation of Pol II by acting as a ratchet that moves the RNA-DNA hybrid through the active site by switching from straight to bent conformations at each step of nucleotide addition. During transcription elongation, Pol II moves on the template as the transcript elongates. Elongation is influenced by the phosphorylation status of the C-terminal domain (CTD) of Pol II largest subunit (NRPB1), which serves as a platform for assembly of factors that regulate transcription initiation, elongation, termination and mRNA processing. The polypeptide is DNA-directed RNA polymerase II subunit RPB1 (Arabidopsis thaliana (Mouse-ear cress)).